The sequence spans 321 residues: Aspartate carbamoyltransferase catalytic subunit (321 aa).

R57 and T58 together coordinate carbamoyl phosphate. L-aspartate is bound at residue K85. Residues R107, H142, and Q145 each contribute to the carbamoyl phosphate site. 2 residues coordinate L-aspartate: R175 and R229. Carbamoyl phosphate contacts are provided by G270 and P271.

It belongs to the aspartate/ornithine carbamoyltransferase superfamily. ATCase family. As to quaternary structure, heterododecamer (2C3:3R2) of six catalytic PyrB chains organized as two trimers (C3), and six regulatory PyrI chains organized as three dimers (R2).

It carries out the reaction carbamoyl phosphate + L-aspartate = N-carbamoyl-L-aspartate + phosphate + H(+). It functions in the pathway pyrimidine metabolism; UMP biosynthesis via de novo pathway; (S)-dihydroorotate from bicarbonate: step 2/3. Its function is as follows. Catalyzes the condensation of carbamoyl phosphate and aspartate to form carbamoyl aspartate and inorganic phosphate, the committed step in the de novo pyrimidine nucleotide biosynthesis pathway. This chain is Aspartate carbamoyltransferase catalytic subunit, found in Mycobacterium leprae (strain TN).